A 152-amino-acid polypeptide reads, in one-letter code: Putative pre-16S rRNA nuclease (152 aa).

The protein belongs to the YqgF nuclease family.

The protein localises to the cytoplasm. Could be a nuclease involved in processing of the 5'-end of pre-16S rRNA. The chain is Putative pre-16S rRNA nuclease from Synechocystis sp. (strain ATCC 27184 / PCC 6803 / Kazusa).